Consider the following 491-residue polypeptide: Glutamate--tRNA ligase (491 aa).

The short motif at 9-19 (PSPTGTPHVGM) is the 'HIGH' region element. Residues 253 to 257 (KLSKR) carry the 'KMSKS' region motif. ATP is bound at residue Lys256.

The protein belongs to the class-I aminoacyl-tRNA synthetase family. Glutamate--tRNA ligase type 1 subfamily. As to quaternary structure, monomer.

It is found in the cytoplasm. The catalysed reaction is tRNA(Glu) + L-glutamate + ATP = L-glutamyl-tRNA(Glu) + AMP + diphosphate. In terms of biological role, catalyzes the attachment of glutamate to tRNA(Glu) in a two-step reaction: glutamate is first activated by ATP to form Glu-AMP and then transferred to the acceptor end of tRNA(Glu). The chain is Glutamate--tRNA ligase from Leifsonia xyli subsp. xyli (strain CTCB07).